We begin with the raw amino-acid sequence, 616 residues long: MPKYRSATTTHGRNMAGARALWRATGMTDADFGKPIIAVVNSFTQFVPGHVHLRDLGKLVAEQIEAAGGVAKEFNTIAVDDGIAMGHGGMLYSLPSRELIADSVEYMVNAHCADAMVCISNCDKITPGMLMASLRLNIPVIFVSGGPMEAGKTKLSDKIIKLDLVDAMIQGADPKVSDEQSNQVERSACPTCGSCSGMFTANSMNCLTEALGLSQPGNGSLLATHADRKELFLNAGKRIVELTKRYYEQDDASALPRNIASKAAFENAMTLDIAMGGSTNTVLHLLAAAQEAEIDFTMSDIDKLSRKVPQLCKVAPSTQKYHMEDVHRAGGVLGILGELDRAGLLNREVKNVLGLTLPQTLEQYDVMVTQDDAVKKMFRAGPAGIRTTQAFSQDCRWDTLDDDRAEGCIRSLEHAYSKDGGLAVLYGNFAENGCIVKTAGVDDSILKFTGPAKVYESQDDAVEAILGGKVVEGDVVVIRYEGPKGGPGMQEMLYPTSFLKSMGLGKACALITDGRFSGGTSGLSIGHVSPEAASGGNIALIEDGDMIAIDIPNRSIQLQLSDAEIAARREAQEARGDQAWTPKNRQRQVSFALRAYASLATSADKGAVRDKSKLGG.

Residue D81 coordinates Mg(2+). C122 contributes to the [2Fe-2S] cluster binding site. D123 and K124 together coordinate Mg(2+). Position 124 is an N6-carboxylysine (K124). A [2Fe-2S] cluster-binding site is contributed by C195. E491 serves as a coordination point for Mg(2+). The active-site Proton acceptor is the S517.

This sequence belongs to the IlvD/Edd family. As to quaternary structure, homodimer. [2Fe-2S] cluster is required as a cofactor. Mg(2+) serves as cofactor.

The catalysed reaction is (2R)-2,3-dihydroxy-3-methylbutanoate = 3-methyl-2-oxobutanoate + H2O. The enzyme catalyses (2R,3R)-2,3-dihydroxy-3-methylpentanoate = (S)-3-methyl-2-oxopentanoate + H2O. Its pathway is amino-acid biosynthesis; L-isoleucine biosynthesis; L-isoleucine from 2-oxobutanoate: step 3/4. The protein operates within amino-acid biosynthesis; L-valine biosynthesis; L-valine from pyruvate: step 3/4. Functionally, functions in the biosynthesis of branched-chain amino acids. Catalyzes the dehydration of (2R,3R)-2,3-dihydroxy-3-methylpentanoate (2,3-dihydroxy-3-methylvalerate) into 2-oxo-3-methylpentanoate (2-oxo-3-methylvalerate) and of (2R)-2,3-dihydroxy-3-methylbutanoate (2,3-dihydroxyisovalerate) into 2-oxo-3-methylbutanoate (2-oxoisovalerate), the penultimate precursor to L-isoleucine and L-valine, respectively. This chain is Dihydroxy-acid dehydratase, found in Klebsiella pneumoniae subsp. pneumoniae (strain ATCC 700721 / MGH 78578).